A 200-amino-acid chain; its full sequence is MVIFGLTGGIGSGKSLVASYFSTFFKAKIFDADKVVHELYKYDSDVIRLVSEYFPDSVDNGIVDRNNLRQHFLTDNHLWVEFQSVIHAIVLKKKKDFIMLHNRRSVRYVVLDIPLLIESNFYSCCDFIIHVTTSRLLQMQRVLRRGLSIKEFESIRCKQLSESSRKKFANFTIRTGLSKKDILFQIKKIMLNVNNKCNMD.

The region spanning 3–200 is the DPCK domain; the sequence is IFGLTGGIGS…LNVNNKCNMD (198 aa). Residue 11-16 participates in ATP binding; that stretch reads GSGKSL.

The protein belongs to the CoaE family.

Its subcellular location is the cytoplasm. It catalyses the reaction 3'-dephospho-CoA + ATP = ADP + CoA + H(+). It participates in cofactor biosynthesis; coenzyme A biosynthesis; CoA from (R)-pantothenate: step 5/5. Catalyzes the phosphorylation of the 3'-hydroxyl group of dephosphocoenzyme A to form coenzyme A. This chain is Dephospho-CoA kinase, found in Ehrlichia canis (strain Jake).